Consider the following 820-residue polypeptide: Probable protease Ga0182885_104520 (820 aa).

The protein belongs to the peptidase C25 family.

Probably a dedicated protease for substrate gasdermin bGSDM; cleaves the bGSDM precursor, releasing the pore-forming moiety, which integrates into the membrane and triggers cell death. Involved in defense against bacteriophages. Expression of bacterial gasdermin (bGSDM) and this neighboring protease is toxic in E.coli. The chain is Probable protease Ga0182885_104520 from Desulfuromonadales bacterium.